A 244-amino-acid polypeptide reads, in one-letter code: Probable phosphatase CA_C0509 (244 aa).

Residues H8, H10, H16, H41, E74, H102, H132, D193, and H195 each coordinate Zn(2+).

Belongs to the PHP family. Zn(2+) is required as a cofactor.

The polypeptide is Probable phosphatase CA_C0509 (Clostridium acetobutylicum (strain ATCC 824 / DSM 792 / JCM 1419 / IAM 19013 / LMG 5710 / NBRC 13948 / NRRL B-527 / VKM B-1787 / 2291 / W)).